The following is a 612-amino-acid chain: UvrABC system protein C (612 aa).

The region spanning His-21–Val-99 is the GIY-YIG domain. A UVR domain is found at Gln-208–Thr-243.

This sequence belongs to the UvrC family. As to quaternary structure, interacts with UvrB in an incision complex.

It is found in the cytoplasm. Its function is as follows. The UvrABC repair system catalyzes the recognition and processing of DNA lesions. UvrC both incises the 5' and 3' sides of the lesion. The N-terminal half is responsible for the 3' incision and the C-terminal half is responsible for the 5' incision. The chain is UvrABC system protein C from Idiomarina loihiensis (strain ATCC BAA-735 / DSM 15497 / L2-TR).